The primary structure comprises 306 residues: Small ribosomal subunit protein uS2 (306 aa).

The tract at residues E257 to A306 is disordered. Basic and acidic residues predominate over residues E275–A286. Over residues E287–D300 the composition is skewed to low complexity.

It belongs to the universal ribosomal protein uS2 family.

The protein is Small ribosomal subunit protein uS2 of Streptomyces griseus subsp. griseus (strain JCM 4626 / CBS 651.72 / NBRC 13350 / KCC S-0626 / ISP 5235).